Reading from the N-terminus, the 153-residue chain is uncharacterized protein (153 aa).

To M.jannaschii MJ1183.

This is an uncharacterized protein from Methanothermobacter thermautotrophicus (strain ATCC 29096 / DSM 1053 / JCM 10044 / NBRC 100330 / Delta H) (Methanobacterium thermoautotrophicum).